The sequence spans 1380 residues: Inverted formin-2 (1380 aa).

The region spanning 1–330 (MSLKEGAHTK…RAVLLADDCQ (330 aa)) is the GBD/FH3 domain. Disordered regions lie at residues 341–391 (LVTS…SGIP) and 440–541 (ISTS…PPPL). Residues 343–352 (TSKKHPSKEK) are compositionally biased toward basic residues. Over residues 367 to 385 (QTDKPKDESCEEKTVKKDP) the composition is skewed to basic and acidic residues. An FH1 domain is found at 432 to 592 (VVSNAIDRIS…DYSLGYLPKA (161 aa)). Composition is skewed to pro residues over residues 446 to 470 (LPPP…PPLP) and 478 to 541 (TPPP…PPPL). The FH2 domain maps to 593 to 981 (YFKVNKPTLK…AEKRKKQLAD (389 aa)). Coiled coils occupy residues 879–930 (LKKL…KLAD) and 956–991 (LKAK…KGEN). The region spanning 1009–1024 (DALLADIKKGFQLRKT) is the WH2 domain. Disordered stretches follow at residues 1026-1049 (KTKT…DGTD), 1188-1244 (HKER…LSEA), and 1260-1380 (FQSS…CVVQ). 3 stretches are compositionally biased toward polar residues: residues 1206-1244 (GTES…LSEA), 1260-1284 (FQSS…QAQR), and 1294-1303 (TRDTTVTEGS). A compositionally biased stretch (basic and acidic residues) spans 1306 to 1322 (EEDKCNDEGYPEHKTMG). Low complexity predominate over residues 1328–1339 (SSSHSTTLQQSS). The segment covering 1345-1359 (VKRGSSKHKKKRRSS) has biased composition (basic residues).

Belongs to the formin homology family.

In Xenopus tropicalis (Western clawed frog), this protein is Inverted formin-2 (inf2).